The following is a 20-amino-acid chain: Dihydroorotase-like protein (20 aa).

This sequence belongs to the metallo-dependent hydrolases superfamily. DHOase family. PyrC' subfamily. Heterododecamer of 6 active PyrB subunits and 6 non-catalytic PyrC' subunits.

Functionally, non-functional DHOase. In Pseudomonas fluorescens biotype A, this protein is Dihydroorotase-like protein (pyrC').